Here is a 2245-residue protein sequence, read N- to C-terminus: Basic helix-loop-helix domain-containing protein USF3 (2245 aa).

Residues 1–28 are disordered; that stretch reads MPEMTENETPTKKQHRKKNRETHNAVER. The bHLH domain occupies 18-69; it reads KNRETHNAVERHRKKKINAGINRIGELIPCSPALKQSKNMILDQAFKYITEL. Residues 77-112 are a coiled coil; that stretch reads LLNGGNNEQAEEIKKLRKQLEEIQKENGRYIELLKA. 13 disordered regions span residues 271 to 290, 447 to 470, 881 to 900, 906 to 933, 1015 to 1041, 1164 to 1238, 1307 to 1331, 1460 to 1624, 1636 to 1664, 1736 to 1764, 1777 to 1815, 1834 to 1859, and 1891 to 2031; these read LHTC…QENP, SQTP…TSNH, SKSK…VTSE, AAKS…ALSD, KNPQ…IVDS, PSEA…SITS, IPNS…AKRA, IKQQ…VSGH, LEQQ…ERNR, TFKP…GNPV, ISQN…ENTC, GSQR…YNCP, and STLN…QPAT. Positions 273–288 are enriched in polar residues; that stretch reads TCLNDQNSSENKNGQE. Over residues 881–896 the composition is skewed to low complexity; sequence SKSKSAEKSSPPSQES. Residues 912-925 show a composition bias toward polar residues; it reads STPNLQQETSQDKP. 2 stretches are compositionally biased toward polar residues: residues 1185 to 1202 and 1219 to 1238; these read GTGQ…QGSI and IKTS…SITS. A compositionally biased stretch (basic and acidic residues) spans 1319-1331; the sequence is PSHESRKDSAKRA. Residues 1462 to 1478 are compositionally biased toward low complexity; sequence QQQQQQQQQQQQQQQQQ. Composition is skewed to polar residues over residues 1501-1520 and 1528-1538; these read SVHS…QEVQ and VQGTQTSQLSL. Residues 1560-1569 are compositionally biased toward low complexity; that stretch reads QQMQQQMQQH. Polar residues predominate over residues 1570–1585; that stretch reads FGSSQTEKSCENPSTS. Residues 1593–1624 are compositionally biased toward low complexity; sequence QNHLNQDIMHQQQDVGSRQQGSGVSSEHVSGH. The span at 1636–1654 shows a compositional bias: polar residues; it reads LEQQMVSQPSIVTRSSDMT. 2 stretches are compositionally biased toward polar residues: residues 1904 to 1923 and 1998 to 2007; these read GDIQ…SNPM and SGNQRQSTVF.

The protein localises to the nucleus. Functionally, involved in the negative regulation of epithelial-mesenchymal transition, the process by which epithelial cells lose their polarity and adhesion properties to become mesenchymal cells with enhanced migration and invasive properties. This is Basic helix-loop-helix domain-containing protein USF3 from Homo sapiens (Human).